The chain runs to 642 residues: 2-oxoacid:ferredoxin oxidoreductase 2, subunit alpha (642 aa).

Positions 263 to 267 match the YPITP motif motif; sequence YPITP. Positions 266 and 356 each coordinate substrate.

Heterodimer composed of an alpha and a beta subunit.

The catalysed reaction is a 2-oxocarboxylate + 2 oxidized [2Fe-2S]-[ferredoxin] + CoA = an acyl-CoA + 2 reduced [2Fe-2S]-[ferredoxin] + CO2 + H(+). Functionally, catalyzes the coenzyme A-dependent oxidative decarboxylation of different 2-oxoacids such as pyruvate, 2-oxobutyrate, glyoxylate and 2-oxoglutarate to form their CoA derivatives. The chain is 2-oxoacid:ferredoxin oxidoreductase 2, subunit alpha from Aeropyrum pernix (strain ATCC 700893 / DSM 11879 / JCM 9820 / NBRC 100138 / K1).